The primary structure comprises 143 residues: Holo-[acyl-carrier-protein] synthase (143 aa).

Positions 9 and 63 each coordinate Mg(2+).

Belongs to the P-Pant transferase superfamily. AcpS family. It depends on Mg(2+) as a cofactor.

Its subcellular location is the cytoplasm. The catalysed reaction is apo-[ACP] + CoA = holo-[ACP] + adenosine 3',5'-bisphosphate + H(+). Functionally, transfers the 4'-phosphopantetheine moiety from coenzyme A to a Ser of acyl-carrier-protein. The polypeptide is Holo-[acyl-carrier-protein] synthase (Burkholderia mallei (strain NCTC 10247)).